We begin with the raw amino-acid sequence, 600 residues long: Nisin transport ATP-binding protein NisT (600 aa).

Helical transmembrane passes span A34 to I54, L69 to L89, A147 to T167, W168 to L188, and I260 to S280. Residues A34–N317 enclose the ABC transmembrane type-1 domain. An ABC transporter domain is found at V352–S592. Position 386–393 (G386–S393) interacts with ATP.

It belongs to the ABC transporter superfamily. Nisin exporter (TC 3.A.1.111.3) family.

The protein resides in the cell membrane. In terms of biological role, probably implicated in the export process of the lantibiotic nisin. The polypeptide is Nisin transport ATP-binding protein NisT (nisT) (Lactococcus lactis subsp. lactis (Streptococcus lactis)).